The chain runs to 375 residues: Metal tolerance protein B (375 aa).

At 1–57 (MELEQICILKPDDEEEMESPSPSKTEENLGVVPLSCAFTRQEHCVSETKEREESTRR) the chain is on the cytoplasmic side. The helical transmembrane segment at 58-78 (LSSLIFLYLIVMSVQIVGGFK) threads the bilayer. Residues 79–84 (ANSLAV) lie on the Vacuolar side of the membrane. Residues 85–105 (MTDAAHLLSDVAGLCVSLLAI) traverse the membrane as a helical segment. Over 106–122 (KVSSWEANPRNSFGFKR) the chain is Cytoplasmic. Residues 123 to 143 (LEVLAAFLSVQLIWLVSGVII) traverse the membrane as a helical segment. At 144–160 (HEAIQRLLSRSREVNGE) the chain is on the vacuolar side. The helical transmembrane segment at 161–181 (IMFGISAFGFFMNLVMVLWLG) threads the bilayer. A required for zinc-binding region spans residues 182-206 (HNHSHHHHDHHHHHHNHKHQHQHHH). The Cytoplasmic segment spans residues 182–240 (HNHSHHHHDHHHHHHNHKHQHQHHHKEVVAEEEEEEMNPLKGEKSSSKEMNINIQGAYL). Residues 241-261 (HAMADMIQSLGVMIGGGIIWV) traverse the membrane as a helical segment. Topologically, residues 262–264 (KPK) are vacuolar. The helical transmembrane segment at 265–285 (WVLVDLICTLVFSAFALAATL) threads the bilayer. Residues 286-375 (PILKNIFGIL…YHATVQVESE (90 aa)) lie on the Cytoplasmic side of the membrane.

This sequence belongs to the cation diffusion facilitator (CDF) transporter (TC 2.A.4) family. SLC30A subfamily.

It localises to the vacuole membrane. Its function is as follows. Involved in sequestration of excess zinc in the cytoplasm into vacuoles to maintain zinc homeostasis. This Arabidopsis thaliana (Mouse-ear cress) protein is Metal tolerance protein B (MTPB).